The chain runs to 376 residues: Coatomer subunit delta-4 (376 aa).

A disordered region spans residues 65 to 92 (LNTDTDTFTSRPKGRTSGGTTGAGKGIG). Gly residues predominate over residues 80–92 (TSGGTTGAGKGIG). The region spanning 134 to 376 (SDPVTVAVEE…RLVADNYQVV (243 aa)) is the MHD domain.

The protein belongs to the adaptor complexes medium subunit family. Delta-COP subfamily. Oligomeric complex that consists of at least the alpha, beta, beta', gamma, delta, epsilon and zeta subunits.

It localises to the cytoplasm. Its subcellular location is the golgi apparatus membrane. It is found in the cytoplasmic vesicle. The protein resides in the COPI-coated vesicle membrane. The coatomer is a cytosolic protein complex that binds to dilysine motifs and reversibly associates with Golgi non-clathrin-coated vesicles, which further mediate biosynthetic protein transport from the ER, via the Golgi up to the trans Golgi network. Coatomer complex is required for budding from Golgi membranes, and is essential for the retrograde Golgi-to-ER transport of dilysine-tagged proteins. The chain is Coatomer subunit delta-4 from Oryza sativa subsp. japonica (Rice).